The sequence spans 368 residues: Glycolate oxidase 3 (368 aa).

M1 carries the post-translational modification N-acetylmethionine. Positions 1–359 (MEITNVMEYE…SRTHIKTDWD (359 aa)) constitute an FMN hydroxy acid dehydrogenase domain. Residue Y24 participates in glyoxylate binding. FMN contacts are provided by residues 77-79 (PTA), S106, 127-129 (QLY), and T155. Y129 is a binding site for glyoxylate. R164 is a binding site for glyoxylate. Positions 230 and 252 each coordinate FMN. Glyoxylate-binding residues include H254 and R257. Catalysis depends on H254, which acts as the Proton acceptor. FMN contacts are provided by residues 285–289 (DGGVR) and 308–309 (GR).

The protein belongs to the FMN-dependent alpha-hydroxy acid dehydrogenase family. Homotetramer. The cofactor is FMN.

The protein localises to the peroxisome. It carries out the reaction glycolate + O2 = glyoxylate + H2O2. It participates in photosynthesis; photorespiration; glycine from 2-phosphoglycolate: step 2/3. Its function is as follows. Catalyzes the oxidation of glycolate to glyoxylate, with a reduction of O2 to H2O2. Is a key enzyme in photorespiration in green plants. The polypeptide is Glycolate oxidase 3 (GLO5) (Arabidopsis thaliana (Mouse-ear cress)).